Here is a 593-residue protein sequence, read N- to C-terminus: MGESIHGLERSHKCTELSSSNIGEKVTVMGWVQKQRNLGSLVFIDLRDRTGIVQLVFTDKDGEMFDKAKTIRSEYVIATVGTVAARSAEAVNKKMATGEIEIIASELRILSSSETPPMYIEENSDVNEQTRLKYRFLDLRRPDMQRNLILRHRVAKVARDYYDQNGFLEIETPILIKSTPEGARDYLVPSRVHPGKFFALPQSPQLYKQLLMVSGYDRYFQIAKCFRDEDLRADRQPEFTQIDIEMSFVNVDDVLEVNEGFVKKAFKEALGVDVETPFTRMPYAEAMERFGSDKPDIRFGMELVNMSDLVANCGFKVFTDAVAMGGSVRAINAKGCAKFSRKEIDALVDLVKTYKAKGMAWISISQENEIKSSFAKFMSEDEMKAILNRAQAEAGDLICFVADKNNVVFDALGQLRLEIARKLDILNPDEFKFLWVTEFPLFEYDEEDQRWAAKHHPFTSPMDEDLQYLDTDPGRVRAKAYDMVLNGVELGGGSIRIHIQELQAKMFKMLGFTEEDANRKFGFLLEAFKYGTPPHGGMAFGLDRLVMLMAKRNSIRDVIAFPKVQNASCPMSNAPDVVDETQIEELHISIAKE.

Glu-181 serves as a coordination point for L-aspartate. Residues Gln-205–Lys-208 form an aspartate region. Arg-227 contributes to the L-aspartate binding site. ATP is bound by residues Arg-227–Glu-229 and Gln-236. Residue His-455 coordinates L-aspartate. Glu-489 contacts ATP. Arg-496 lines the L-aspartate pocket. Gly-541–Arg-544 is a binding site for ATP.

It belongs to the class-II aminoacyl-tRNA synthetase family. Type 1 subfamily. In terms of assembly, homodimer.

Its subcellular location is the cytoplasm. It carries out the reaction tRNA(Asp) + L-aspartate + ATP = L-aspartyl-tRNA(Asp) + AMP + diphosphate. Functionally, catalyzes the attachment of L-aspartate to tRNA(Asp) in a two-step reaction: L-aspartate is first activated by ATP to form Asp-AMP and then transferred to the acceptor end of tRNA(Asp). The protein is Aspartate--tRNA ligase of Ruminiclostridium cellulolyticum (strain ATCC 35319 / DSM 5812 / JCM 6584 / H10) (Clostridium cellulolyticum).